The sequence spans 174 residues: Pituitary tumor-transforming gene 1 protein-interacting protein (174 aa).

An N-terminal signal peptide occupies residues 1-29 (MASAVLGLTLRWVMFLSAVLLLLLPGASA). The Extracellular portion of the chain corresponds to 30–93 (QEPPGVGCSE…RWGVCWVNFE (64 aa)). In terms of domain architecture, PSI spans 36–89 (GCSEYTNRSCEECLRNVSCLWCNENKACLDYPVRKILPPASLCKLSSARWGVCW). N-linked (GlcNAc...) asparagine glycosylation is found at asparagine 42 and asparagine 51. A helical membrane pass occupies residues 94 to 114 (ALIITMSVLGGSVLLGITVCC). Residues 115–174 (CCCCRRKRSRKPDKSDERAMREQEERRVRQEERRAEMKSRHDEIRKKYGLFKEQNPYEKF) lie on the Cytoplasmic side of the membrane. The tract at residues 126 to 155 (PDKSDERAMREQEERRVRQEERRAEMKSRH) is disordered. A coiled-coil region spans residues 127–163 (DKSDERAMREQEERRVRQEERRAEMKSRHDEIRKKYG). Tyrosine 171 carries the post-translational modification Phosphotyrosine.

In terms of assembly, interacts with PTTG1.

It is found in the cell membrane. The protein resides in the cytoplasm. Its subcellular location is the nucleus. Its function is as follows. May facilitate PTTG1 nuclear translocation. This is Pituitary tumor-transforming gene 1 protein-interacting protein (Pttg1ip) from Rattus norvegicus (Rat).